We begin with the raw amino-acid sequence, 95 residues long: Aspartyl/glutamyl-tRNA(Asn/Gln) amidotransferase subunit C (95 aa).

Belongs to the GatC family. As to quaternary structure, heterotrimer of A, B and C subunits.

The catalysed reaction is L-glutamyl-tRNA(Gln) + L-glutamine + ATP + H2O = L-glutaminyl-tRNA(Gln) + L-glutamate + ADP + phosphate + H(+). The enzyme catalyses L-aspartyl-tRNA(Asn) + L-glutamine + ATP + H2O = L-asparaginyl-tRNA(Asn) + L-glutamate + ADP + phosphate + 2 H(+). Functionally, allows the formation of correctly charged Asn-tRNA(Asn) or Gln-tRNA(Gln) through the transamidation of misacylated Asp-tRNA(Asn) or Glu-tRNA(Gln) in organisms which lack either or both of asparaginyl-tRNA or glutaminyl-tRNA synthetases. The reaction takes place in the presence of glutamine and ATP through an activated phospho-Asp-tRNA(Asn) or phospho-Glu-tRNA(Gln). The protein is Aspartyl/glutamyl-tRNA(Asn/Gln) amidotransferase subunit C of Syntrophotalea carbinolica (strain DSM 2380 / NBRC 103641 / GraBd1) (Pelobacter carbinolicus).